The chain runs to 721 residues: Mitogen-activated protein kinase 6 (721 aa).

Residue methionine 1 forms a Peptide (Met-Gly) (interchain with G-Cter in ubiquitin) linkage. The Protein kinase domain maps to 20–316 (YMDLKPLGCG…AEEALSHPYM (297 aa)). ATP-binding positions include 26-34 (LGCGGNGLV) and lysine 49. The active-site Proton acceptor is aspartate 152. Serine 189 bears the Phosphoserine; by PAK1, PAK2 and PAK3 mark. Positions 189–191 (SEG) match the SEG motif motif. The short motif at 332 to 337 (FHIEDE) is the FRIEDE motif element. A phosphoserine mark is found at serine 386, serine 452, serine 556, serine 558, serine 665, and serine 684. Polar residues predominate over residues 701-715 (AMKSSPQIPHQTYSS). A disordered region spans residues 701-721 (AMKSSPQIPHQTYSSILKHLN).

Belongs to the protein kinase superfamily. CMGC Ser/Thr protein kinase family. MAP kinase subfamily. In terms of assembly, heterodimer with ERK4/MAPK4. Interacts with (via FRIEDE motif) MAPKAPK5. Interacts with UBE3A; this interaction may be indirect and mediated by HERC2, possibly via HERC2 interaction with NEURL4. Mg(2+) is required as a cofactor. Phosphorylated at Ser-189 by PAK1, PAK2 and PAK3 resulting in catalytic activation. Phosphorylated by MAPKAPK5 at other sites. Post-translationally, ubiquitination at Met-1 leads to degradation by the proteasome pathway.

Its subcellular location is the cytoplasm. It localises to the nucleus. It carries out the reaction L-seryl-[protein] + ATP = O-phospho-L-seryl-[protein] + ADP + H(+). It catalyses the reaction L-threonyl-[protein] + ATP = O-phospho-L-threonyl-[protein] + ADP + H(+). With respect to regulation, activated by phosphorylation at Ser-189. Atypical MAPK protein. Phosphorylates microtubule-associated protein 2 (MAP2) and MAPKAPK5. The precise role of the complex formed with MAPKAPK5 is still unclear, but the complex follows a complex set of phosphorylation events: upon interaction with atypical MAPKAPK5, ERK3/MAPK6 is phosphorylated at Ser-189 and then mediates phosphorylation and activation of MAPKAPK5, which in turn phosphorylates ERK3/MAPK6. May promote entry in the cell cycle. The chain is Mitogen-activated protein kinase 6 (MAPK6) from Pongo abelii (Sumatran orangutan).